The following is a 356-amino-acid chain: S-adenosylmethionine:tRNA ribosyltransferase-isomerase (356 aa).

Belongs to the QueA family. As to quaternary structure, monomer.

The protein localises to the cytoplasm. It carries out the reaction 7-aminomethyl-7-carbaguanosine(34) in tRNA + S-adenosyl-L-methionine = epoxyqueuosine(34) in tRNA + adenine + L-methionine + 2 H(+). Its pathway is tRNA modification; tRNA-queuosine biosynthesis. Functionally, transfers and isomerizes the ribose moiety from AdoMet to the 7-aminomethyl group of 7-deazaguanine (preQ1-tRNA) to give epoxyqueuosine (oQ-tRNA). In Xanthomonas campestris pv. campestris (strain B100), this protein is S-adenosylmethionine:tRNA ribosyltransferase-isomerase.